The chain runs to 232 residues: ATP-dependent Clp protease proteolytic subunit 2 (232 aa).

Ser124 functions as the Nucleophile in the catalytic mechanism. His149 is a catalytic residue.

This sequence belongs to the peptidase S14 family. Fourteen ClpP subunits assemble into 2 heptameric rings which stack back to back to give a disk-like structure with a central cavity, resembling the structure of eukaryotic proteasomes.

The protein resides in the cytoplasm. The enzyme catalyses Hydrolysis of proteins to small peptides in the presence of ATP and magnesium. alpha-casein is the usual test substrate. In the absence of ATP, only oligopeptides shorter than five residues are hydrolyzed (such as succinyl-Leu-Tyr-|-NHMec, and Leu-Tyr-Leu-|-Tyr-Trp, in which cleavage of the -Tyr-|-Leu- and -Tyr-|-Trp bonds also occurs).. In terms of biological role, cleaves peptides in various proteins in a process that requires ATP hydrolysis. Has a chymotrypsin-like activity. Plays a major role in the degradation of misfolded proteins. The protein is ATP-dependent Clp protease proteolytic subunit 2 of Nostoc sp. (strain PCC 7120 / SAG 25.82 / UTEX 2576).